The following is a 232-amino-acid chain: Ubiquinone biosynthesis O-methyltransferase (232 aa).

Residues Arg-36, Gly-55, Asp-76, and Met-120 each contribute to the S-adenosyl-L-methionine site.

It belongs to the methyltransferase superfamily. UbiG/COQ3 family.

The enzyme catalyses a 3-demethylubiquinol + S-adenosyl-L-methionine = a ubiquinol + S-adenosyl-L-homocysteine + H(+). It catalyses the reaction a 3-(all-trans-polyprenyl)benzene-1,2-diol + S-adenosyl-L-methionine = a 2-methoxy-6-(all-trans-polyprenyl)phenol + S-adenosyl-L-homocysteine + H(+). It participates in cofactor biosynthesis; ubiquinone biosynthesis. Its function is as follows. O-methyltransferase that catalyzes the 2 O-methylation steps in the ubiquinone biosynthetic pathway. In Paraburkholderia phytofirmans (strain DSM 17436 / LMG 22146 / PsJN) (Burkholderia phytofirmans), this protein is Ubiquinone biosynthesis O-methyltransferase.